The primary structure comprises 428 residues: 5-methylthioadenosine/S-adenosylhomocysteine deaminase (428 aa).

Zn(2+) is bound by residues H65 and H67. 3 residues coordinate substrate: E94, R158, and H184. H211 lines the Zn(2+) pocket. E214 and D299 together coordinate substrate. Residue D299 coordinates Zn(2+).

This sequence belongs to the metallo-dependent hydrolases superfamily. MTA/SAH deaminase family. Zn(2+) is required as a cofactor.

It catalyses the reaction S-adenosyl-L-homocysteine + H2O + H(+) = S-inosyl-L-homocysteine + NH4(+). The catalysed reaction is S-methyl-5'-thioadenosine + H2O + H(+) = S-methyl-5'-thioinosine + NH4(+). Functionally, catalyzes the deamination of 5-methylthioadenosine and S-adenosyl-L-homocysteine into 5-methylthioinosine and S-inosyl-L-homocysteine, respectively. Is also able to deaminate adenosine. The protein is 5-methylthioadenosine/S-adenosylhomocysteine deaminase of Moorella thermoacetica (strain ATCC 39073 / JCM 9320).